A 165-amino-acid polypeptide reads, in one-letter code: RxLR effector protein PITG_09218 (165 aa).

Residues 1–24 form the signal peptide; that stretch reads MRFSAFLTLLLVAFVASCSTFASA. Residues 31 to 57 carry the RxLR-dEER motif; sequence RRLRADAAPVPVNKDNVAKLAGGFLEK. Residues 129–149 traverse the membrane as a helical segment; that stretch reads VTLGATVAGFAIYGAYKALFD.

The protein belongs to the RxLR effector family.

It is found in the secreted. It localises to the host mitochondrion membrane. The protein resides in the host endoplasmic reticulum membrane. Functionally, effector that enhances P.infestans colonization of Nicotiana benthamiana leaves. This is RxLR effector protein PITG_09218 from Phytophthora infestans (strain T30-4) (Potato late blight agent).